Here is a 358-residue protein sequence, read N- to C-terminus: MSGVQLSSLSTLNYRNLAPGTLHFPAGVTGVFGENGAGKTNLLEAAYLALTGLTDVTRLEQLIQSGEREAYVRADVQQGGSLSIQEVGLGRGRRHLKVDGVRAKTGDLPRGSAVWIRPEDSELVFGPPAGRRAYLDALLSRLSARYGQQLARYERTVAQRNAALKAGEDWAMHVWDDALVKLGTDIMLFRRRALTRLDELAREANAQLGSRKPLTLTLSESTTPETYAHDLAARRAEELSRGATVTGPHRDDLILTLGELPASEYASRGEGRTVALALRCAELELLAEKFGEKPVLLIDDFTAELDPGRRGFLLDLAASVPQAIVTGTERAPGAALTLRAHAGRFTEESRPATVGVGA.

33–40 contributes to the ATP binding site; it reads GENGAGKT.

The protein belongs to the RecF family.

It is found in the cytoplasm. The RecF protein is involved in DNA metabolism; it is required for DNA replication and normal SOS inducibility. RecF binds preferentially to single-stranded, linear DNA. It also seems to bind ATP. This Deinococcus geothermalis (strain DSM 11300 / CIP 105573 / AG-3a) protein is DNA replication and repair protein RecF.